An 86-amino-acid chain; its full sequence is Ferredoxin-like protein YgcO (86 aa).

The 4Fe-4S ferredoxin-type domain maps to 45–74 (GNLRIDYRSCLECGTCRLLCDESTLQQWRY).

Belongs to the bacterial-type ferredoxin family. FixX subfamily.

Its function is as follows. Could be a 3Fe-4S cluster-containing protein. Probably participates in a redox process with YgcN, YgcQ and YgcR. This is Ferredoxin-like protein YgcO (ygcO) from Escherichia coli (strain K12).